Here is a 313-residue protein sequence, read N- to C-terminus: 1-phosphofructokinase (313 aa).

Residues 222-227 (SMGAKG) and 254-255 (GD) contribute to the ATP site. Asp-255 serves as the catalytic Proton acceptor.

The protein belongs to the carbohydrate kinase PfkB family.

The enzyme catalyses beta-D-fructose 1-phosphate + ATP = beta-D-fructose 1,6-bisphosphate + ADP + H(+). In terms of biological role, catalyzes the ATP-dependent phosphorylation of fructose-l-phosphate to fructose-l,6-bisphosphate. The sequence is that of 1-phosphofructokinase (fruK) from Haemophilus influenzae (strain ATCC 51907 / DSM 11121 / KW20 / Rd).